We begin with the raw amino-acid sequence, 324 residues long: Probable UDP-sugar transporter protein SLC35A4 (324 aa).

Topologically, residues 1 to 18 (MSVEDGGVPGLGRPRKAR) are cytoplasmic. The helical transmembrane segment at 19–39 (WTLMLLLSTAMYGAHAPLLAL) threads the bilayer. Residues 40–52 (CHVDGRVPFRPSS) lie on the Lumenal side of the membrane. Residues 53 to 73 (AVLLTELTKLLLCALSLLVGW) form a helical membrane-spanning segment. The Cytoplasmic segment spans residues 74-85 (QAWPQGTPPWRQ). Residues 86 to 106 (AAPFALSALLYGANNNLVIYL) traverse the membrane as a helical segment. The Lumenal segment spans residues 107–141 (QRYMDPSTYQVLSNLKIGSTALFYCLCLRHRLSAR). Residues 142–162 (QGLALLLLMAAGACYAAGGLQ) traverse the membrane as a helical segment. Residues 163 to 180 (DPGTTLPGPPSAAATSPM) are Cytoplasmic-facing. A helical transmembrane segment spans residues 181–201 (PLHITPLGLLLLILYCLISGL). The Lumenal portion of the chain corresponds to 202–214 (SSVYTELLMKRQR). The chain crosses the membrane as a helical span at residues 215-235 (LPLALQNLFLYSFGVLLNLGL). The Cytoplasmic segment spans residues 236-248 (HAGGGPGPGLLEG). The chain crosses the membrane as a helical span at residues 249–271 (FSGWMALVVLSQALNGLLMSAVM). At 272–275 (KHGS) the chain is on the lumenal side. The chain crosses the membrane as a helical span at residues 276–298 (SITRLFVVSCSLVVNAVLSAALL). Over 299 to 324 (RLQLTAAFFLATLLIGLAVRLYYGSR) the chain is Cytoplasmic.

The protein belongs to the nucleotide-sugar transporter family. SLC35A subfamily. In terms of assembly, found in a complex with SLC35A2 and SLC35A3.

Its subcellular location is the golgi apparatus membrane. The catalysed reaction is CDP-L-ribitol(in) + CDP(out) = CDP-L-ribitol(out) + CDP(in). Its function is as follows. Mediates the transport of CDP-ribitol. Does not exhibit CMP-sialic acid, UDP-galactose and UDP-N-acetylglucosamine transport activity. The polypeptide is Probable UDP-sugar transporter protein SLC35A4 (Bos taurus (Bovine)).